The following is a 1320-amino-acid chain: Phosphoribosylformylglycinamidine synthase (1320 aa).

Residues 310–321 and Ala686 each bind ATP; that span reads GAATGSGGEIRD. Mg(2+)-binding residues include Asp687, Glu726, Asn730, and Asp894. An ATP-binding site is contributed by Ser896. In terms of domain architecture, Glutamine amidotransferase type-1 spans 1067–1320; the sequence is VAILREQGVN…MFRNARAFIG (254 aa). The Nucleophile role is filled by Cys1160. Catalysis depends on residues His1285 and Glu1287.

This sequence in the N-terminal section; belongs to the FGAMS family. In terms of assembly, monomer.

The protein localises to the cytoplasm. The catalysed reaction is N(2)-formyl-N(1)-(5-phospho-beta-D-ribosyl)glycinamide + L-glutamine + ATP + H2O = 2-formamido-N(1)-(5-O-phospho-beta-D-ribosyl)acetamidine + L-glutamate + ADP + phosphate + H(+). It participates in purine metabolism; IMP biosynthesis via de novo pathway; 5-amino-1-(5-phospho-D-ribosyl)imidazole from N(2)-formyl-N(1)-(5-phospho-D-ribosyl)glycinamide: step 1/2. Functionally, phosphoribosylformylglycinamidine synthase involved in the purines biosynthetic pathway. Catalyzes the ATP-dependent conversion of formylglycinamide ribonucleotide (FGAR) and glutamine to yield formylglycinamidine ribonucleotide (FGAM) and glutamate. The chain is Phosphoribosylformylglycinamidine synthase from Colwellia psychrerythraea (strain 34H / ATCC BAA-681) (Vibrio psychroerythus).